A 63-amino-acid chain; its full sequence is Large ribosomal subunit protein uL29 (63 aa).

It belongs to the universal ribosomal protein uL29 family.

The polypeptide is Large ribosomal subunit protein uL29 (Chromohalobacter salexigens (strain ATCC BAA-138 / DSM 3043 / CIP 106854 / NCIMB 13768 / 1H11)).